The primary structure comprises 736 residues: Zinc finger CCCH domain-containing protein 14 (736 aa).

Position 1 is an N-acetylmethionine (Met1). A compositionally biased stretch (polar residues) spans 77 to 103; sequence TTEPSSLKSPDTSIFDSNVPSNKSSFS. Residues 77–153 are disordered; it reads TTEPSSLKSP…RHSYDDGAST (77 aa). At Ser85 the chain carries Phosphoserine. Glycyl lysine isopeptide (Lys-Gly) (interchain with G-Cter in SUMO2) cross-links involve residues Lys99, Lys139, Lys175, and Lys198. A compositionally biased stretch (basic and acidic residues) spans 123-148; it reads RPEKRDSRVSTSSQEHKSTNVRHSYD. Position 240 is a phosphoserine (Ser240). Glycyl lysine isopeptide (Lys-Gly) (interchain with G-Cter in SUMO2) cross-links involve residues Lys245, Lys283, and Lys295. The disordered stretch occupies residues 308–350; that stretch reads FSHDGEEEEEDEDYGTRVGSLSSSVSVPAKPERRPSLPPSKQA. Residues Ser309, Ser327, and Ser343 each carry the phosphoserine modification. N6-acetyllysine; alternate is present on Lys357. Residue Lys357 forms a Glycyl lysine isopeptide (Lys-Gly) (interchain with G-Cter in SUMO2); alternate linkage. A compositionally biased stretch (polar residues) spans 367–380; that stretch reads TKTTNYPAVPQKQT. The tract at residues 367 to 386 is disordered; it reads TKTTNYPAVPQKQTLPVAPR. Lys378 participates in a covalent cross-link: Glycyl lysine isopeptide (Lys-Gly) (interchain with G-Cter in SUMO2). Ser390 and Ser409 each carry phosphoserine. A disordered region spans residues 400 to 420; that stretch reads QGQNRAPRISPPVKEEEAKGD. Residues Lys413 and Lys489 each participate in a glycyl lysine isopeptide (Lys-Gly) (interchain with G-Cter in SUMO2) cross-link. A phosphoserine mark is found at Ser498, Ser515, Ser527, and Ser620. C3H1-type zinc fingers lie at residues 595 to 620, 621 to 640, 641 to 656, 682 to 699, and 701 to 719; these read EKLL…HPIS, PCKA…VHPN, CKYD…PFTH, CRYF…YHPK, and CRFN…HPTI.

Belongs to the ZC3H14 family. In terms of assembly, homodimer; facilitating circular RNAs (circRNAs) formation. Associates with the spliceosome. Interacts with HOOK2. Interacts with ZFC3H1 in a RNase-sensitive manner.

It localises to the nucleus speckle. Functionally, RNA-binding protein involved in the biogenesis of circular RNAs (circRNAs), which are produced by back-splicing circularization of pre-mRNAs. Acts by binding to both exon-intron boundary and 3'-UTR of pre-mRNAs to promote circRNA biogenesis through dimerization and the association with the spliceosome. Required for spermatogenesis via involvement in circRNA biogenesis. Regulates the pre-mRNA processing of ATP5MC1; preventing its degradation. Also binds the poly(A) tail of mRNAs; controlling poly(A) length in neuronal cells. The protein is Zinc finger CCCH domain-containing protein 14 of Rattus norvegicus (Rat).